A 236-amino-acid polypeptide reads, in one-letter code: Terpene cyclase andB (236 aa).

A run of 7 helical transmembrane segments spans residues 13–33 (TVVN…YILM), 45–65 (MSML…ILCP), 70–90 (VVRP…YAAI), 106–126 (HLPL…IALI), 135–155 (FLWS…FQLL), 166–186 (VLWL…TLMW), and 200–220 (LTAY…VVFY).

This sequence belongs to the paxB family.

It is found in the membrane. It participates in secondary metabolite biosynthesis; terpenoid biosynthesis. Its function is as follows. Terpene cyclase; part of the gene cluster that mediates the biosynthesis of anditomin, a fungal meroterpenoid. The first step of the pathway is the synthesis of 3,5-dimethylorsellinic acid (DMOA) by the polyketide synthase andM. DMOA is then converted to the phthalide compound 5,7-dihydroxy-4,6-dimethylphthalide (DHDMP) by the cytochrome P450 monooxygenase andK, which is further prenylated by the prenyltransferase andD to yield farnesyl-DHDMP. Further epoxidation by the FAD-dependent monooxygenase andE leads to epoxyfarnesyl-DHDMP. The next step involves the terpene cyclase andB that converts epoxyfarnesyl-DHDMP into preandiloid A through opening of the epoxide ring followed by the cyclization of the farnesyl moiety. Preandiloid A is in turn oxidized at the C-3 hydroxyl group to yield preandiloid B by the dehydrogenase andC. The dioxygenase andA is solely responsible for the dehydrogenation of preandiloid B leading to the enone preandiloid C, as well as for the intriguing structural rearrangement to generate the bicyclo[2.2.2]octane core, transforming preandiloid C into andiconin. FAD-binding monooxygenase andJ then produces andilesin D which is reduced by dehydrogenase andI to yield andilesin A. Action of acetyltransferase andG followed by a spontaneous acetate elimination leads then to andilesin B, which is in turn substrate of the short chain dehydrogenase andH to yield andilesin C. Finally, the dioxygenase andF catalyzes the transformation of andilesin C to anditomin. The polypeptide is Terpene cyclase andB (Emericella variicolor (Aspergillus stellatus)).